A 2143-amino-acid chain; its full sequence is Proteasome activator BLM10 (2143 aa).

Residues 1-65 (MTANNDDDIK…SPLRARSATP (65 aa)) are disordered. A phosphoserine mark is found at S11, S29, S56, and S62. T64 and T66 each carry phosphothreonine. Residue S1041 is modified to Phosphoserine. The stretch at 1316 to 1355 (VVINKIIPSLEKAIKDHDYMKIQVILNVLLIKKIHRKLMT) is one HEAT 1 repeat. Residues 1648–1732 (CELNMSDLFE…LAWWLPAVVD (85 aa)) are bromodomain-like (BRDL). 3 HEAT repeats span residues 1779 to 1814 (PDVG…NQSN), 1902 to 1941 (YLVD…MPIR), and 1985 to 2023 (EEKN…NWKE). Residues 2141–2143 (YYA) carry the YYX motif motif.

This sequence belongs to the BLM10 family. In terms of assembly, according to PubMed:12973301, colocalizes with nascent proteasome. According to PubMed:15778719, associates with proteasome core particles and also forms a complex with regulatory particle-core particle (RP-CP).

Its subcellular location is the nucleus. It is found in the cytoplasm. Associated component of the proteasome that specifically recognizes acetylated histones and promotes ATP- and ubiquitin-independent degradation of core histones during DNA damage response. Recognizes and binds acetylated histones via its bromodomain-like (BRDL) region and activates the proteasome by opening the gated channel for substrate entry. Binds to the core proteasome via its C-terminus, which occupies the same binding sites as the proteasomal ATPases, opening the closed structure of the proteasome via an active gating mechanism. Involved in DNA damage response in somatic cells: binds to acetylated histones and promotes degradation of histones following DNA double-strand breaks. The sequence is that of Proteasome activator BLM10 (BLM10) from Saccharomyces cerevisiae (strain ATCC 204508 / S288c) (Baker's yeast).